The sequence spans 442 residues: Histidine--tRNA ligase (442 aa).

Residues 416 to 442 (SGDETTVPVEEFPPEGGEELPTYEDYE) form a disordered region. The span at 427-442 (FPPEGGEELPTYEDYE) shows a compositional bias: acidic residues.

Belongs to the class-II aminoacyl-tRNA synthetase family.

The protein localises to the cytoplasm. The catalysed reaction is tRNA(His) + L-histidine + ATP = L-histidyl-tRNA(His) + AMP + diphosphate + H(+). This Halorubrum lacusprofundi (strain ATCC 49239 / DSM 5036 / JCM 8891 / ACAM 34) protein is Histidine--tRNA ligase.